Reading from the N-terminus, the 973-residue chain is Peptidyl-glycine alpha-amidating monooxygenase (973 aa).

The N-terminal stretch at 1-20 (MAGRVPSLLVLLVFPSSCLA) is a signal peptide. The peptidylglycine alpha-hydroxylating monooxygenase stretch occupies residues 1–494 (MAGRVPSLLV…EGTWEPEHTG (494 aa)). A propeptide spanning residues 21–30 (FRSPLSVFKR) is cleaved from the precursor. The Intragranular segment spans residues 31 to 863 (FKETTRPFSN…QKLIKEPGSG (833 aa)). 5 cysteine pairs are disulfide-bonded: C42/C181, C76/C121, C109/C126, C222/C329, and C288/C310. The Cu(2+) site is built by H102 and H103. Cu(2+) is bound by residues H167, H237, H239, and M309. Residues 495–817 (DFHMEEALDW…LTEKLEHRSV (323 aa)) form a peptidyl-alpha-hydroxyglycine alpha-amidating lyase region. 4 NHL repeats span residues 498-541 (MEEA…NSFD), 567-608 (AAVL…LDPN), 617-662 (LGRS…FSPS), and 670-714 (GEES…FKTD). Ca(2+) is bound at residue V517. Residue R530 participates in a protein binding. H582 contacts Zn(2+). Position 584 (L584) interacts with Ca(2+). The cysteines at positions 631 and 652 are disulfide-linked. Y651 contacts a protein. Residue H687 coordinates Zn(2+). The cysteines at positions 699 and 710 are disulfide-linked. R703 serves as a coordination point for a protein. Residue N762 is glycosylated (N-linked (GlcNAc...) asparagine). Residues 766–809 (GEIIDIFKPVRKHFDMPHDIVASEDGTVYIGDAHTNTVWKFTLT) form an NHL 5 repeat. Zn(2+) is bound at residue H783. D784 is a binding site for Ca(2+). A helical transmembrane segment spans residues 864 to 887 (VPVVLITTLLVIPVVVLLAIAIFI). A sulfotyrosine mark is found at I875 and R893. Topologically, residues 888-973 (RWKKSRAFGD…PLPALAPSSS (86 aa)) are cytoplasmic. 3 positions are modified to phosphoserine: S918, S929, and S942. The tract at residues 925 to 942 (NFFASRKGYSRKGFDRLS) is interaction with RASSF9. The tract at residues 937–973 (GFDRLSTEGSDQEKEDDGSESEEEYSAPLPALAPSSS) is disordered. T943 carries the post-translational modification Phosphothreonine. Phosphoserine; by UHMK1; in vitro is present on S946. Residues 949-961 (EKEDDGSESEEEY) show a composition bias toward acidic residues. A Phosphoserine modification is found at S957. The span at 962–973 (SAPLPALAPSSS) shows a compositional bias: low complexity.

In the C-terminal section; belongs to the peptidyl-alpha-hydroxyglycine alpha-amidating lyase family. It in the N-terminal section; belongs to the copper type II ascorbate-dependent monooxygenase family. In terms of assembly, monomer. Interacts with RASSF9. Zn(2+) is required as a cofactor. Requires Cu(2+) as cofactor.

The protein localises to the cytoplasmic vesicle. Its subcellular location is the secretory vesicle membrane. It localises to the membrane. It is found in the secreted. The enzyme catalyses a [peptide]-C-terminal glycine + 2 L-ascorbate + O2 = a [peptide]-C-terminal (2S)-2-hydroxyglycine + 2 monodehydro-L-ascorbate radical + H2O. It carries out the reaction a [peptide]-C-terminal (2S)-2-hydroxyglycine = a [peptide]-C-terminal amide + glyoxylate. It catalyses the reaction N-dodecanoylglycine + 2 L-ascorbate + O2 = N-dodecanoyl-(2S)-hydroxyglycine + 2 monodehydro-L-ascorbate radical + H2O. The catalysed reaction is N-dodecanoyl-(2S)-hydroxyglycine = dodecanamide + glyoxylate. The enzyme catalyses N-(9Z,12Z,15Z)-octadecatrienoylglycine + 2 L-ascorbate + O2 = N-(9Z,12Z,15Z)-octadecatrienoyl-(2S)-hydroxyglycine + 2 monodehydro-L-ascorbate radical + H2O. It carries out the reaction N-(9Z,12Z,15Z)-octadecatrienoyl-(2S)-hydroxyglycine = (9Z,12Z,15Z)-octadecatrienamide + glyoxylate. It catalyses the reaction N-(9Z-octadecenoyl)glycine + 2 L-ascorbate + O2 = N-(9Z-octadecenoyl)-(2S)-hydroxyglycine + 2 monodehydro-L-ascorbate radical + H2O. The catalysed reaction is N-(9Z-octadecenoyl)-(2S)-hydroxyglycine = (9Z)-octadecenamide + glyoxylate. The enzyme catalyses N-tetradecanoylglycine + 2 L-ascorbate + O2 = N-tetradecanoyl-(2S)-hydroxyglycine + 2 monodehydro-L-ascorbate radical + H2O. It carries out the reaction N-tetradecanoyl-(2S)-hydroxyglycine = tetradecamide + glyoxylate. It catalyses the reaction N-decanoylglycine + 2 L-ascorbate + O2 = N-decanoyl-(2S)-hydroxyglycine + 2 monodehydro-L-ascorbate radical + H2O. The catalysed reaction is N-decanoyl-(2S)-hydroxyglycine = decanamide + glyoxylate. The enzyme catalyses N-octanoylglycine + 2 L-ascorbate + O2 = N-octanoyl-(2S)-hydroxyglycine + 2 monodehydro-L-ascorbate radical + H2O. It carries out the reaction N-octanoyl-(2S)-hydroxyglycine = octanamide + glyoxylate. Its activity is regulated as follows. PAM activity is inhibited by EDTA, phenylglyoxal and diethyl pyrocarbonate. PAL activity is stimulated by cadmium and inhibited by mercury. Bifunctional enzyme that catalyzes amidation of the C-terminus of proteins. Alpha-amidation is present at the C-terminus of many endocrine hormones and neuropeptides and is required for their activity. C-terminal amidation also takes place in response to protein fragmentation triggered by oxidative stress, promoting degradation of amidated protein fragments by the proteasome. Alpha-amidation involves two sequential reactions, both of which are catalyzed by separate catalytic domains of the enzyme. The first step, catalyzed by peptidyl alpha-hydroxylating monooxygenase (PHM) domain, is the copper-, ascorbate-, and O2- dependent stereospecific hydroxylation (with S stereochemistry) at the alpha-carbon (C-alpha) of the C-terminal glycine of the peptidylglycine substrate. The second step, catalyzed by the peptidylglycine amidoglycolate lyase (PAL) domain, is the zinc-dependent cleavage of the N-C-alpha bond, producing the alpha-amidated peptide and glyoxylate. Similarly, catalyzes the two-step conversion of an N-fatty acylglycine to a primary fatty acid amide and glyoxylate. The chain is Peptidyl-glycine alpha-amidating monooxygenase from Homo sapiens (Human).